The sequence spans 186 residues: Protein Syd (186 aa).

Belongs to the Syd family.

It localises to the cell inner membrane. In terms of biological role, interacts with the SecY protein in vivo. May bind preferentially to an uncomplexed state of SecY, thus functioning either as a chelating agent for excess SecY in the cell or as a regulatory factor that negatively controls the translocase function. In Erwinia tasmaniensis (strain DSM 17950 / CFBP 7177 / CIP 109463 / NCPPB 4357 / Et1/99), this protein is Protein Syd.